A 310-amino-acid chain; its full sequence is tRNA uridine(34) hydroxylase (310 aa).

The 95-residue stretch at 124-218 (SDPEVLLIDT…YFEEVAQEES (95 aa)) folds into the Rhodanese domain. Cys-178 (cysteine persulfide intermediate) is an active-site residue.

It belongs to the TrhO family.

The catalysed reaction is uridine(34) in tRNA + AH2 + O2 = 5-hydroxyuridine(34) in tRNA + A + H2O. In terms of biological role, catalyzes oxygen-dependent 5-hydroxyuridine (ho5U) modification at position 34 in tRNAs. This Pseudomonas entomophila (strain L48) protein is tRNA uridine(34) hydroxylase.